The primary structure comprises 93 residues: Large ribosomal subunit protein uL23cz/uL23cy (93 aa).

It belongs to the universal ribosomal protein uL23 family. Part of the 50S ribosomal subunit.

Its subcellular location is the plastid. The protein localises to the chloroplast. Functionally, binds to 23S rRNA. In Panax ginseng (Korean ginseng), this protein is Large ribosomal subunit protein uL23cz/uL23cy (rpl23-A).